Consider the following 158-residue polypeptide: Transcription elongation factor GreA (158 aa).

Belongs to the GreA/GreB family.

In terms of biological role, necessary for efficient RNA polymerase transcription elongation past template-encoded arresting sites. The arresting sites in DNA have the property of trapping a certain fraction of elongating RNA polymerases that pass through, resulting in locked ternary complexes. Cleavage of the nascent transcript by cleavage factors such as GreA or GreB allows the resumption of elongation from the new 3'terminus. GreA releases sequences of 2 to 3 nucleotides. The protein is Transcription elongation factor GreA of Psychrobacter cryohalolentis (strain ATCC BAA-1226 / DSM 17306 / VKM B-2378 / K5).